A 734-amino-acid chain; its full sequence is Photosystem I P700 chlorophyll a apoprotein A2 (734 aa).

8 consecutive transmembrane segments (helical) span residues 46–69 (IFASHFGQLAIIFLWTSGNLFHVA), 135–158 (LYTGALFLLFLSALSLIGGWLHLQ), 175–199 (LNHHLSGLFGVSSLAWTGHLVHVAI), 273–291 (MAHHHLAIAILFLIAGHMY), 330–353 (IHFQLGLALASLGVITSLVAQHMY), 369–395 (AALYTHHQYIAGFIMTGAFAHGAIFFI), 417–439 (AIISHLSWASLFLGFHTLGLYVH), and 517–535 (FLVHHAIALGLHTTTLILV). The [4Fe-4S] cluster site is built by C559 and C568. 2 consecutive transmembrane segments (helical) span residues 575-596 (AFYLAVFWMLNTIGWVTFYWHW) and 643-665 (LSVWAWMFLFGHLVWATGFMFLI). Residues H654, M662, and Y670 each contribute to the chlorophyll a site. Position 671 (W671) interacts with phylloquinone. Residues 707–727 (LVGLAHFSVGYIFTYAAFLIA) form a helical membrane-spanning segment.

The protein belongs to the PsaA/PsaB family. In terms of assembly, the PsaA/B heterodimer binds the P700 chlorophyll special pair and subsequent electron acceptors. PSI consists of a core antenna complex that captures photons, and an electron transfer chain that converts photonic excitation into a charge separation. The eukaryotic PSI reaction center is composed of at least 11 subunits. Requires P700 is a chlorophyll a/chlorophyll a' dimer, A0 is one or more chlorophyll a, A1 is one or both phylloquinones and FX is a shared 4Fe-4S iron-sulfur center. as cofactor.

It localises to the plastid. The protein localises to the chloroplast thylakoid membrane. It catalyses the reaction reduced [plastocyanin] + hnu + oxidized [2Fe-2S]-[ferredoxin] = oxidized [plastocyanin] + reduced [2Fe-2S]-[ferredoxin]. Functionally, psaA and PsaB bind P700, the primary electron donor of photosystem I (PSI), as well as the electron acceptors A0, A1 and FX. PSI is a plastocyanin-ferredoxin oxidoreductase, converting photonic excitation into a charge separation, which transfers an electron from the donor P700 chlorophyll pair to the spectroscopically characterized acceptors A0, A1, FX, FA and FB in turn. Oxidized P700 is reduced on the lumenal side of the thylakoid membrane by plastocyanin. The sequence is that of Photosystem I P700 chlorophyll a apoprotein A2 from Crucihimalaya wallichii (Rock-cress).